Reading from the N-terminus, the 161-residue chain is Regulator of ribonuclease activity A (161 aa).

Belongs to the RraA family. Homotrimer. Binds to both RNA-binding sites in the C-terminal region of Rne and to RhlB.

It is found in the cytoplasm. Functionally, globally modulates RNA abundance by binding to RNase E (Rne) and regulating its endonucleolytic activity. Can modulate Rne action in a substrate-dependent manner by altering the composition of the degradosome. Modulates RNA-binding and helicase activities of the degradosome. The protein is Regulator of ribonuclease activity A of Shewanella denitrificans (strain OS217 / ATCC BAA-1090 / DSM 15013).